The following is a 373-amino-acid chain: Probable protein phosphatase 2C 73 (373 aa).

A PPM-type phosphatase domain is found at 61-354 (LASLFSKRGE…DDMSVVCLFL (294 aa)). Mn(2+) is bound by residues aspartate 97, glycine 98, aspartate 299, and aspartate 345.

It belongs to the PP2C family. Mg(2+) serves as cofactor. Requires Mn(2+) as cofactor.

It carries out the reaction O-phospho-L-seryl-[protein] + H2O = L-seryl-[protein] + phosphate. The enzyme catalyses O-phospho-L-threonyl-[protein] + H2O = L-threonyl-[protein] + phosphate. This chain is Probable protein phosphatase 2C 73 (PPC6-7), found in Arabidopsis thaliana (Mouse-ear cress).